Reading from the N-terminus, the 77-residue chain is Translation initiation factor IF-1, chloroplastic (77 aa).

Positions Met1–Arg71 constitute an S1-like domain.

Belongs to the IF-1 family. As to quaternary structure, component of the 30S ribosomal translation pre-initiation complex which assembles on the 30S ribosome in the order IF-2 and IF-3, IF-1 and N-formylmethionyl-tRNA(fMet); mRNA recruitment can occur at any time during PIC assembly.

It localises to the plastid. The protein localises to the chloroplast. Functionally, one of the essential components for the initiation of protein synthesis. Stabilizes the binding of IF-2 and IF-3 on the 30S subunit to which N-formylmethionyl-tRNA(fMet) subsequently binds. Helps modulate mRNA selection, yielding the 30S pre-initiation complex (PIC). Upon addition of the 50S ribosomal subunit IF-1, IF-2 and IF-3 are released leaving the mature 70S translation initiation complex. The protein is Translation initiation factor IF-1, chloroplastic of Dioscorea elephantipes (Elephant's foot yam).